The following is an 809-amino-acid chain: Leucine--tRNA ligase (809 aa).

Positions 40-50 (PYPSGRIHMGH) match the 'HIGH' region motif. Residues 579–583 (KMSKS) carry the 'KMSKS' region motif. Lys582 is an ATP binding site.

Belongs to the class-I aminoacyl-tRNA synthetase family.

The protein localises to the cytoplasm. It carries out the reaction tRNA(Leu) + L-leucine + ATP = L-leucyl-tRNA(Leu) + AMP + diphosphate. This Campylobacter lari (strain RM2100 / D67 / ATCC BAA-1060) protein is Leucine--tRNA ligase.